Here is a 352-residue protein sequence, read N- to C-terminus: MASSLLLALLFLTPTTVVNPKTEGPCPACWGAIFDLESQRELLLDLAKKSILDKLHLSQRPILSRPVSRGALKTALQRLRGPRRETLLEHDQRQEEYEIISFADTDLSSINQTRLEFHFSGRMASGMEVRQTRFMFFVQFPHNATQTMNIRVLVLRPYDTNLTLTSQYVVQVNASGWYQLLLGPEAQAACSQGHLTLELVPESQVAHSSLILGWFSHRPFVAAQVRVEGKHRVRRRGIDCQGASRMCCRQEFFVDFREIGWNDWIIQPEGYAMNFCTGQCPLHVAGMPGISASFHTAVLNLLKANAAAGTTGRGSCCVPTSRRPLSLLYYDRDSNIVKTDIPDMVVEACGCS.

The signal sequence occupies residues 1-18; it reads MASSLLLALLFLTPTTVV. The propeptide occupies 19 to 236; it reads NPKTEGPCPA…VEGKHRVRRR (218 aa). N-linked (GlcNAc...) asparagine glycosylation is found at asparagine 111, asparagine 143, asparagine 161, and asparagine 173. Disulfide bonds link cysteine 240/cysteine 248, cysteine 247/cysteine 317, cysteine 276/cysteine 349, and cysteine 280/cysteine 351.

Belongs to the TGF-beta family. Homodimeric or heterodimeric through association with alpha and beta subunits, linked by one or more disulfide bonds. Inhibins are heterodimers of one alpha and one beta subunit. Activins are homo- or heterodimers of beta subunits only. Mainly expressed in the adult liver.

It localises to the secreted. Its function is as follows. Inhibins and activins inhibit and activate, respectively, the secretion of follitropin by the pituitary gland. Inhibins/activins are involved in regulating a number of diverse functions such as hypothalamic and pituitary hormone secretion, gonadal hormone secretion, germ cell development and maturation, erythroid differentiation, insulin secretion, nerve cell survival, embryonic axial development or bone growth, depending on their subunit composition. Inhibins appear to oppose the functions of activins. The polypeptide is Inhibin beta C chain (Inhbc) (Mus musculus (Mouse)).